The primary structure comprises 536 residues: Testis-specific protein 10-interacting protein (536 aa).

Disordered stretches follow at residues 1–94 (MLNT…LFSS), 185–234 (SQGL…PGQG), and 246–305 (MEEE…FKGP). Positions 48 to 64 (SGDSLQSQSCQQQRSYS) are enriched in low complexity. Residues 71–83 (KERKPRRRNKKGR) show a composition bias toward basic residues. The stretch at 375–451 (QAWEQQQLKE…LQGIQHRVQA (77 aa)) forms a coiled coil. Residues 491–536 (GNAEGIPRKHRSYRSFGVEMESSPQSPPKTEPTSSQPGRHPSPTLD) are disordered.

The polypeptide is Testis-specific protein 10-interacting protein (Tsga10ip) (Rattus norvegicus (Rat)).